Reading from the N-terminus, the 3550-residue chain is Zinc finger homeobox protein 4 (3550 aa).

Position 1 is an N-acetylmethionine (Met-1). 3 disordered regions span residues Met-1–Asp-54, His-426–Asn-479, and Thr-521–Pro-614. Polar residues predominate over residues Ile-9–Lys-20. Basic and acidic residues-rich tracts occupy residues Glu-39–Asp-54 and Lys-433–Thr-451. Residues Glu-467–Asn-479 are compositionally biased toward acidic residues. Polar residues-rich tracts occupy residues Gly-542–Ser-553 and Arg-566–Thr-576. 3 C2H2-type zinc fingers span residues Ile-611 to His-634, Leu-642 to His-665, and Phe-697 to His-721. The tract at residues His-739–Pro-763 is disordered. Residues Pro-742–Gly-752 are compositionally biased toward polar residues. 4 C2H2-type zinc fingers span residues Arg-765–Glu-787, Tyr-915–His-939, Leu-971–His-993, and Tyr-1019–His-1043. Positions Lys-1100–Pro-1142 are disordered. A compositionally biased stretch (basic and acidic residues) spans Lys-1125–Pro-1142. Residue Lys-1165 forms a Glycyl lysine isopeptide (Lys-Gly) (interchain with G-Cter in SUMO2) linkage. 2 consecutive C2H2-type zinc fingers follow at residues Tyr-1188–His-1211 and Ile-1217–His-1240. Residues Ala-1271–Val-1339 form a disordered region. Residues Val-1297–Val-1326 show a composition bias toward basic and acidic residues. Residue Lys-1315 forms a Glycyl lysine isopeptide (Lys-Gly) (interchain with G-Cter in SUMO2) linkage. C2H2-type zinc fingers lie at residues Tyr-1368 to His-1390 and Thr-1396 to His-1419. The disordered stretch occupies residues Glu-1467 to Leu-1492. The C2H2-type 12 zinc finger occupies Tyr-1512–His-1538. Residue Lys-1562 forms a Glycyl lysine isopeptide (Lys-Gly) (interchain with G-Cter in SUMO2) linkage. A C2H2-type 13 zinc finger spans residues Tyr-1564 to His-1588. The disordered stretch occupies residues Pro-1779–Gly-1873. A compositionally biased stretch (low complexity) spans Gln-1792–Gln-1808. Residue Lys-1805 forms a Glycyl lysine isopeptide (Lys-Gly) (interchain with G-Cter in SUMO2) linkage. Over residues Pro-1823–Ser-1860 the composition is skewed to basic and acidic residues. The segment at Leu-1916–His-1939 adopts a C2H2-type 14 zinc-finger fold. The disordered stretch occupies residues Lys-1984–Gln-2006. Residues Gln-1994–Ala-2003 show a composition bias toward pro residues. DNA-binding regions (homeobox) lie at residues Phe-2069–Asn-2128 and Lys-2166–Tyr-2225. A C2H2-type 15; degenerate zinc finger spans residues Tyr-2252 to Tyr-2276. Over residues Thr-2318–Leu-2331 the composition is skewed to polar residues. The tract at residues Thr-2318 to Leu-2412 is disordered. A compositionally biased stretch (basic and acidic residues) spans Pro-2337–Gln-2355. The span at Ser-2356 to Glu-2376 shows a compositional bias: polar residues. The segment covering Pro-2383 to Gln-2392 has biased composition (pro residues). Residues Ser-2401–Leu-2412 show a composition bias toward polar residues. The C2H2-type 16 zinc-finger motif lies at Tyr-2430–His-2452. The segment covering Gly-2490–Pro-2508 has biased composition (polar residues). Residues Gly-2490 to Leu-2545 are disordered. Basic and acidic residues predominate over residues Arg-2517–Arg-2541. A DNA-binding region (homeobox 3) is located at residues Asp-2542–Gln-2601. Residues Lys-2612 to His-2635 form a C2H2-type 17 zinc finger. Residue Ser-2645 is modified to Phosphoserine. Disordered stretches follow at residues Ala-2746–Pro-2791 and His-2810–Lys-2866. The span at Leu-2781 to Pro-2791 shows a compositional bias: polar residues. Positions Phe-2811–Gln-2820 are enriched in basic and acidic residues. The segment covering Pro-2843–Phe-2855 has biased composition (low complexity). The segment at residues His-2865–Lys-2924 is a DNA-binding region (homeobox 4). The C2H2-type 18 zinc finger occupies Pro-2943–His-2967. 2 disordered regions span residues Pro-3051–Ile-3156 and Gln-3261–Asp-3318. Positions Pro-3058–Gly-3068 are enriched in polar residues. A compositionally biased stretch (low complexity) spans Pro-3075–Ser-3088. Pro residues predominate over residues Thr-3097–Ser-3109. The segment covering Ile-3136–Ile-3156 has biased composition (basic and acidic residues). A Glycyl lysine isopeptide (Lys-Gly) (interchain with G-Cter in SUMO2) cross-link involves residue Lys-3137. The stretch at Ala-3248–Lys-3277 forms a coiled coil. A compositionally biased stretch (low complexity) spans Gln-3261 to Gln-3276. The span at Ser-3298–Asp-3318 shows a compositional bias: basic and acidic residues. Residues Phe-3337–Tyr-3361 form a C2H2-type 19; degenerate zinc finger. Residues Tyr-3381–His-3405 form a C2H2-type 20 zinc finger. The segment at Leu-3424–Ser-3445 is disordered. Over residues Thr-3435–Ser-3445 the composition is skewed to low complexity.

The protein belongs to the krueppel C2H2-type zinc-finger protein family. Expressed in brain, heart, lung, muscle and small intestine. No expression detected in undifferentiated P19 cells, however, expression was seen following retinoic acid treatment to induce neuronal differentiation. Expressed in undifferentiated C2C12 cells, following induction of muscle differentiation in a low-serum medium, expression levels were decreased.

It localises to the nucleus. Functionally, may play a role in neural and muscle differentiation. May be involved in transcriptional regulation. The polypeptide is Zinc finger homeobox protein 4 (Zfhx4) (Mus musculus (Mouse)).